The sequence spans 350 residues: S-adenosylmethionine:tRNA ribosyltransferase-isomerase (350 aa).

The protein belongs to the QueA family. In terms of assembly, monomer.

The protein resides in the cytoplasm. It catalyses the reaction 7-aminomethyl-7-carbaguanosine(34) in tRNA + S-adenosyl-L-methionine = epoxyqueuosine(34) in tRNA + adenine + L-methionine + 2 H(+). Its pathway is tRNA modification; tRNA-queuosine biosynthesis. Transfers and isomerizes the ribose moiety from AdoMet to the 7-aminomethyl group of 7-deazaguanine (preQ1-tRNA) to give epoxyqueuosine (oQ-tRNA). This chain is S-adenosylmethionine:tRNA ribosyltransferase-isomerase, found in Bacillus cereus (strain Q1).